The sequence spans 509 residues: Heat shock 70 kDa protein 14 (509 aa).

It belongs to the heat shock protein 70 family. Component of ribosome-associated complex (RAC), a heterodimer composed of Hsp70/DnaK-type chaperone HSPA14 and Hsp40/DnaJ-type chaperone DNAJC2.

It localises to the cytoplasm. It is found in the cytosol. Functionally, component of the ribosome-associated complex (RAC), a complex involved in folding or maintaining nascent polypeptides in a folding-competent state. In the RAC complex, binds to the nascent polypeptide chain, while DNAJC2 stimulates its ATPase activity. The chain is Heat shock 70 kDa protein 14 (HSPA14) from Homo sapiens (Human).